We begin with the raw amino-acid sequence, 379 residues long: tRNA 2-selenouridine synthase (379 aa).

In terms of domain architecture, Rhodanese spans 17-140 (FLSGAPLLDT…MRRFLIESLE (124 aa)). C100 (S-selanylcysteine intermediate) is an active-site residue.

Belongs to the SelU family. Monomer.

The enzyme catalyses 5-methylaminomethyl-2-thiouridine(34) in tRNA + selenophosphate + (2E)-geranyl diphosphate + H2O + H(+) = 5-methylaminomethyl-2-selenouridine(34) in tRNA + (2E)-thiogeraniol + phosphate + diphosphate. It carries out the reaction 5-methylaminomethyl-2-thiouridine(34) in tRNA + (2E)-geranyl diphosphate = 5-methylaminomethyl-S-(2E)-geranyl-thiouridine(34) in tRNA + diphosphate. The catalysed reaction is 5-methylaminomethyl-S-(2E)-geranyl-thiouridine(34) in tRNA + selenophosphate + H(+) = 5-methylaminomethyl-2-(Se-phospho)selenouridine(34) in tRNA + (2E)-thiogeraniol. It catalyses the reaction 5-methylaminomethyl-2-(Se-phospho)selenouridine(34) in tRNA + H2O = 5-methylaminomethyl-2-selenouridine(34) in tRNA + phosphate. Functionally, involved in the post-transcriptional modification of the uridine at the wobble position (U34) of tRNA(Lys), tRNA(Glu) and tRNA(Gln). Catalyzes the conversion of 2-thiouridine (S2U-RNA) to 2-selenouridine (Se2U-RNA). Acts in a two-step process involving geranylation of 2-thiouridine (S2U) to S-geranyl-2-thiouridine (geS2U) and subsequent selenation of the latter derivative to 2-selenouridine (Se2U) in the tRNA chain. The sequence is that of tRNA 2-selenouridine synthase from Hahella chejuensis (strain KCTC 2396).